A 92-amino-acid polypeptide reads, in one-letter code: RQC P-site tRNA stabilizing factor (92 aa).

Residues 5-65 (MRLDKYLKVS…GPKIVTAKIE (61 aa)) form the S4 RNA-binding domain.

It belongs to the RqcP family. As to quaternary structure, associates with stalled 50S ribosomal subunits. Binds to RqcH, 23S rRNA and the P-site tRNA. Does not require RqcH for association with 50S subunits.

Functionally, key component of the ribosome quality control system (RQC), a ribosome-associated complex that mediates the extraction of incompletely synthesized nascent chains from stalled ribosomes and their subsequent degradation. RqcH recruits Ala-charged tRNA, and with RqcP directs the elongation of stalled nascent chains on 50S ribosomal subunits, leading to non-templated C-terminal alanine extensions (Ala tail). The Ala tail promotes nascent chain degradation. RqcP is associated with the translocation-like movement of the peptidyl-tRNA from the A-site into the P-site. This chain is RQC P-site tRNA stabilizing factor, found in Listeria innocua serovar 6a (strain ATCC BAA-680 / CLIP 11262).